The primary structure comprises 537 residues: DELLA protein GAI (537 aa).

The tract at residues 1–33 (MKRDHQEISGSGSNPAESSSIKGKLWEEDPDAG) is disordered. Positions 9–20 (SGSGSNPAESSS) are enriched in low complexity. The DELLA motif signature appears at 37–41 (DELLA). The tract at residues 131–157 (KSDPGLEITRKRAKTESSSSSSSTTTR) is disordered. Residues 147–156 (SSSSSSSTTT) show a composition bias toward low complexity. Residues 162 to 533 (IDSQEAGVRL…RPLIAHLGLA (372 aa)) form the GRAS domain. The leucine repeat I (LRI) stretch occupies residues 169–223 (VRLVHTLMACAEAVQQDNLKLADALVKHIGLLASSQTGAMRKVATYFAEALARRI). A VHIID region spans residues 241–306 (QIPFYETCPY…GGPPAFRLTG (66 aa)). Residues 272 to 276 (VHVID) carry the VHIID motif. Residues 320–352 (QVGWKLAQLAERIGIEFEFRGFVANSLADLEPE) are leucine repeat II (LRII). The PFYRE stretch occupies residues 364–454 (VAVNAVFELH…ELYLGRQICN (91 aa)). The LXXLL motif motif lies at 372 to 376 (LHPLL). The SAW stretch occupies residues 457–533 (ACEGMDRVER…RPLIAHLGLA (77 aa)).

The protein belongs to the GRAS family. DELLA subfamily. In terms of processing, phosphorylated. Post-translationally, ubiquitinated. Upon GA application it is ubiquitinated, leading to its subsequent degradation.

The protein localises to the nucleus. Its function is as follows. Probable transcriptional regulator that acts as a repressor of the gibberellin (GA) signaling pathway. Probably acts by participating in large multiprotein complexes that represses transcription of GA-inducible genes. Upon GA application, it is degraded by the proteasome, allowing the GA signaling pathway. The polypeptide is DELLA protein GAI (GAI) (Gossypium hirsutum (Upland cotton)).